Here is a 516-residue protein sequence, read N- to C-terminus: Putative transposase y4bL/y4kJ/y4tB (516 aa).

Positions 15 to 96 constitute an HTH IS408-type domain; sequence IRTILRLTHE…PDWALVVREL (82 aa). The Integrase catalytic domain maps to 138–319; sequence FRNRHAAGAV…SRRELFEEIE (182 aa). The disordered stretch occupies residues 493 to 516; it reads ERPQAEHAAPTPAHTNIRGRSYYQ.

It belongs to the transposase IS21/IS408/IS1162 family.

The protein is Putative transposase y4bL/y4kJ/y4tB of Sinorhizobium fredii (strain NBRC 101917 / NGR234).